We begin with the raw amino-acid sequence, 599 residues long: Chaperone protein DnaK (599 aa).

Threonine 187 carries the phosphothreonine; by autocatalysis modification. The segment at 575–599 is disordered; that stretch reads AQQAATENSKDSDTVEAEIVDDKAN.

It belongs to the heat shock protein 70 family.

Its function is as follows. Acts as a chaperone. The chain is Chaperone protein DnaK from Mycoplasmopsis pulmonis (strain UAB CTIP) (Mycoplasma pulmonis).